Consider the following 337-residue polypeptide: Centromere protein N (337 aa).

Phosphoserine is present on residues serine 226 and serine 233.

It belongs to the CENP-N/CHL4 family. In terms of assembly, component of the CENPA-NAC complex, at least composed of CENPA, CENPC, CENPH, CENPM, CENPN, CENPT and CENPU. The CENPA-NAC complex interacts with the CENPA-CAD complex, composed of CENPI, CENPK, CENPL, CENPO, CENPP, CENPQ, CENPR and CENPS. Interacts directly with CENPA. Identified in a centromere complex containing histones H2A, H2B and H4, and at least CENPA, CENPB, CENPC, CENPT, CENPN, HJURP, SUPT16H, SSRP1 and RSF1.

It is found in the nucleus. The protein localises to the chromosome. The protein resides in the centromere. It localises to the kinetochore. Functionally, component of the CENPA-NAC (nucleosome-associated) complex, a complex that plays a central role in assembly of kinetochore proteins, mitotic progression and chromosome segregation. The CENPA-NAC complex recruits the CENPA-CAD (nucleosome distal) complex and may be involved in incorporation of newly synthesized CENPA into centromeres. CENPN is the first protein to bind specifically to CENPA nucleosomes and the direct binding of CENPA nucleosomes by CENPN is required for centromere assembly. Required for chromosome congression and efficiently align the chromosomes on a metaphase plate. This Mus musculus (Mouse) protein is Centromere protein N (Cenpn).